A 635-amino-acid polypeptide reads, in one-letter code: Extracellular metalloproteinase 1 (635 aa).

The N-terminal stretch at 1–19 (MHGLLLAAGLLSLPLHVLA) is a signal peptide. The propeptide occupies 20–246 (HPQPSTSTSL…VHNVVDYVAH (227 aa)). Asn287 is a glycosylation site (N-linked (GlcNAc...) asparagine). His430 is a binding site for Zn(2+). Glu431 is a catalytic residue. A Zn(2+)-binding site is contributed by His434. Residues Asn475, Asn594, and Asn623 are each glycosylated (N-linked (GlcNAc...) asparagine).

Belongs to the peptidase M36 family. The cofactor is Zn(2+).

It is found in the secreted. Its function is as follows. Secreted metalloproteinase probably acting as a virulence factor. The protein is Extracellular metalloproteinase 1 (MEP1) of Trichophyton rubrum (Athlete's foot fungus).